Consider the following 788-residue polypeptide: Bifunctional purine biosynthetic protein ADE1 (788 aa).

The segment at 1 to 429 (MSLRILLVGN…NRKDIAYKAF (429 aa)) is GARS. One can recognise an ATP-grasp domain in the interval 114 to 323 (KDFMKKHNIP…LAEVMLACVE (210 aa)). Residue 140–201 (VKKVGHRVVI…EEFLEGDELS (62 aa)) participates in ATP binding. Residues Glu-291 and Asn-293 each contribute to the Mg(2+) site. The AIRS stretch occupies residues 439–752 (ITYAQAGVSI…VVKQEKVAEV (314 aa)).

In the N-terminal section; belongs to the GARS family. The protein in the C-terminal section; belongs to the AIR synthase family. Requires Mg(2+) as cofactor. The cofactor is Mn(2+).

It is found in the cytoplasm. The protein localises to the cytosol. It catalyses the reaction 5-phospho-beta-D-ribosylamine + glycine + ATP = N(1)-(5-phospho-beta-D-ribosyl)glycinamide + ADP + phosphate + H(+). It carries out the reaction 2-formamido-N(1)-(5-O-phospho-beta-D-ribosyl)acetamidine + ATP = 5-amino-1-(5-phospho-beta-D-ribosyl)imidazole + ADP + phosphate + H(+). It participates in purine metabolism; IMP biosynthesis via de novo pathway; 5-amino-1-(5-phospho-D-ribosyl)imidazole from N(2)-formyl-N(1)-(5-phospho-D-ribosyl)glycinamide: step 2/2. The protein operates within purine metabolism; IMP biosynthesis via de novo pathway; N(1)-(5-phospho-D-ribosyl)glycinamide from 5-phospho-alpha-D-ribose 1-diphosphate: step 2/2. Functionally, catalyzes the second and fifth step in the 'de novo' purine biosynthesis pathway; contains phosphoribosylamine--glycine ligase (GARS) and phosphoribosylformylglycinamidine cyclo-ligase (AIRS) activities. This chain is Bifunctional purine biosynthetic protein ADE1, found in Yarrowia lipolytica (strain CLIB 122 / E 150) (Yeast).